A 678-amino-acid polypeptide reads, in one-letter code: Glycine--tRNA ligase beta subunit (678 aa).

It belongs to the class-II aminoacyl-tRNA synthetase family. In terms of assembly, tetramer of two alpha and two beta subunits.

The protein localises to the cytoplasm. The enzyme catalyses tRNA(Gly) + glycine + ATP = glycyl-tRNA(Gly) + AMP + diphosphate. The chain is Glycine--tRNA ligase beta subunit from Streptococcus pneumoniae (strain ATCC BAA-255 / R6).